The chain runs to 621 residues: Type 2 DNA topoisomerase 6 subunit B (621 aa).

ATP contacts are provided by residues N48, D80, 101-102 (SR), 111-118 (GQQGIGIS), and K435.

Belongs to the TOP6B family. Homodimer. Heterotetramer of two Top6A and two Top6B chains.

It catalyses the reaction ATP-dependent breakage, passage and rejoining of double-stranded DNA.. Its function is as follows. Relaxes both positive and negative superturns and exhibits a strong decatenase activity. The polypeptide is Type 2 DNA topoisomerase 6 subunit B (Methanosarcina mazei (strain ATCC BAA-159 / DSM 3647 / Goe1 / Go1 / JCM 11833 / OCM 88) (Methanosarcina frisia)).